Reading from the N-terminus, the 288-residue chain is Putative branched-chain-amino-acid aminotransferase (288 aa).

Lys146 is subject to N6-(pyridoxal phosphate)lysine.

This sequence belongs to the class-IV pyridoxal-phosphate-dependent aminotransferase family. Requires pyridoxal 5'-phosphate as cofactor.

The enzyme catalyses L-leucine + 2-oxoglutarate = 4-methyl-2-oxopentanoate + L-glutamate. It carries out the reaction L-isoleucine + 2-oxoglutarate = (S)-3-methyl-2-oxopentanoate + L-glutamate. The catalysed reaction is L-valine + 2-oxoglutarate = 3-methyl-2-oxobutanoate + L-glutamate. It participates in amino-acid biosynthesis; L-isoleucine biosynthesis; L-isoleucine from 2-oxobutanoate: step 4/4. The protein operates within amino-acid biosynthesis; L-leucine biosynthesis; L-leucine from 3-methyl-2-oxobutanoate: step 4/4. It functions in the pathway amino-acid biosynthesis; L-valine biosynthesis; L-valine from pyruvate: step 4/4. In terms of biological role, acts on leucine, isoleucine and valine. In Methanocaldococcus jannaschii (strain ATCC 43067 / DSM 2661 / JAL-1 / JCM 10045 / NBRC 100440) (Methanococcus jannaschii), this protein is Putative branched-chain-amino-acid aminotransferase (ilvE).